Reading from the N-terminus, the 252-residue chain is 3-dehydroquinate dehydratase (252 aa).

3-dehydroquinate is bound by residues Ser-21, 46-48 (EWR), and Arg-82. The active-site Proton donor/acceptor is the His-143. Lys-170 acts as the Schiff-base intermediate with substrate in catalysis. 3-dehydroquinate-binding residues include Arg-213, Ser-232, and Gln-236.

The protein belongs to the type-I 3-dehydroquinase family. Homodimer.

It carries out the reaction 3-dehydroquinate = 3-dehydroshikimate + H2O. The protein operates within metabolic intermediate biosynthesis; chorismate biosynthesis; chorismate from D-erythrose 4-phosphate and phosphoenolpyruvate: step 3/7. Functionally, involved in the third step of the chorismate pathway, which leads to the biosynthesis of aromatic amino acids. Catalyzes the cis-dehydration of 3-dehydroquinate (DHQ) and introduces the first double bond of the aromatic ring to yield 3-dehydroshikimate. In Escherichia coli O139:H28 (strain E24377A / ETEC), this protein is 3-dehydroquinate dehydratase.